Consider the following 156-residue polypeptide: SsrA-binding protein (156 aa).

Basic and acidic residues predominate over residues 135–150 (KRDTIKDREWQRDRSR). Residues 135–156 (KRDTIKDREWQRDRSRIMKKNT) form a disordered region.

Belongs to the SmpB family.

It is found in the cytoplasm. Functionally, required for rescue of stalled ribosomes mediated by trans-translation. Binds to transfer-messenger RNA (tmRNA), required for stable association of tmRNA with ribosomes. tmRNA and SmpB together mimic tRNA shape, replacing the anticodon stem-loop with SmpB. tmRNA is encoded by the ssrA gene; the 2 termini fold to resemble tRNA(Ala) and it encodes a 'tag peptide', a short internal open reading frame. During trans-translation Ala-aminoacylated tmRNA acts like a tRNA, entering the A-site of stalled ribosomes, displacing the stalled mRNA. The ribosome then switches to translate the ORF on the tmRNA; the nascent peptide is terminated with the 'tag peptide' encoded by the tmRNA and targeted for degradation. The ribosome is freed to recommence translation, which seems to be the essential function of trans-translation. The chain is SsrA-binding protein from Legionella pneumophila (strain Corby).